We begin with the raw amino-acid sequence, 464 residues long: 3-isopropylmalate dehydratase large subunit (464 aa).

[4Fe-4S] cluster contacts are provided by Cys337, Cys397, and Cys400.

It belongs to the aconitase/IPM isomerase family. LeuC type 1 subfamily. Heterodimer of LeuC and LeuD. Requires [4Fe-4S] cluster as cofactor.

The enzyme catalyses (2R,3S)-3-isopropylmalate = (2S)-2-isopropylmalate. The protein operates within amino-acid biosynthesis; L-leucine biosynthesis; L-leucine from 3-methyl-2-oxobutanoate: step 2/4. Catalyzes the isomerization between 2-isopropylmalate and 3-isopropylmalate, via the formation of 2-isopropylmaleate. The sequence is that of 3-isopropylmalate dehydratase large subunit from Bacillus cereus (strain ATCC 10987 / NRS 248).